A 347-amino-acid chain; its full sequence is Quinolinate synthase (347 aa).

Positions 47 and 68 each coordinate iminosuccinate. A [4Fe-4S] cluster-binding site is contributed by cysteine 113. Residues tyrosine 139–asparagine 141 and serine 156 each bind iminosuccinate. Cysteine 200 serves as a coordination point for [4Fe-4S] cluster. Residues histidine 226–glutamate 228 and threonine 243 each bind iminosuccinate. Cysteine 297 contacts [4Fe-4S] cluster.

It belongs to the quinolinate synthase family. Type 1 subfamily. It depends on [4Fe-4S] cluster as a cofactor.

The protein localises to the cytoplasm. It catalyses the reaction iminosuccinate + dihydroxyacetone phosphate = quinolinate + phosphate + 2 H2O + H(+). Its pathway is cofactor biosynthesis; NAD(+) biosynthesis; quinolinate from iminoaspartate: step 1/1. In terms of biological role, catalyzes the condensation of iminoaspartate with dihydroxyacetone phosphate to form quinolinate. In Salmonella gallinarum (strain 287/91 / NCTC 13346), this protein is Quinolinate synthase.